A 362-amino-acid polypeptide reads, in one-letter code: Dihydroorotate dehydrogenase (quinone) (362 aa).

FMN-binding positions include 62-66 (AGYDK) and T86. Substrate is bound at residue K66. 111–115 (NRLGF) contacts substrate. FMN contacts are provided by N139 and N170. N170 is a binding site for substrate. S173 acts as the Nucleophile in catalysis. Position 175 (N175) interacts with substrate. 2 residues coordinate FMN: K215 and S243. Substrate is bound at residue 244 to 245 (NT). Residues G266, G295, and 316-317 (YS) contribute to the FMN site.

The protein belongs to the dihydroorotate dehydrogenase family. Type 2 subfamily. Monomer. FMN is required as a cofactor.

The protein resides in the cell membrane. It catalyses the reaction (S)-dihydroorotate + a quinone = orotate + a quinol. It participates in pyrimidine metabolism; UMP biosynthesis via de novo pathway; orotate from (S)-dihydroorotate (quinone route): step 1/1. Functionally, catalyzes the conversion of dihydroorotate to orotate with quinone as electron acceptor. In Rhizobium johnstonii (strain DSM 114642 / LMG 32736 / 3841) (Rhizobium leguminosarum bv. viciae), this protein is Dihydroorotate dehydrogenase (quinone).